A 389-amino-acid polypeptide reads, in one-letter code: tRNA(Met) cytidine acetate ligase (389 aa).

ATP is bound by residues 8–21 (IAEFNPFHKGHEYL), Gly97, Asn153, and Arg176.

It belongs to the TmcAL family.

It localises to the cytoplasm. The catalysed reaction is cytidine(34) in elongator tRNA(Met) + acetate + ATP = N(4)-acetylcytidine(34) in elongator tRNA(Met) + AMP + diphosphate. Functionally, catalyzes the formation of N(4)-acetylcytidine (ac(4)C) at the wobble position of elongator tRNA(Met), using acetate and ATP as substrates. First activates an acetate ion to form acetyladenylate (Ac-AMP) and then transfers the acetyl group to tRNA to form ac(4)C34. In Lactococcus lactis subsp. cremoris (strain SK11), this protein is tRNA(Met) cytidine acetate ligase.